The primary structure comprises 138 residues: Small ribosomal subunit protein uS11c (138 aa).

Residues 1–24 (MAKPIPKVGSRRNGRSSARKSARR) are disordered. Residues 9 to 24 (GSRRNGRSSARKSARR) are compositionally biased toward basic residues.

The protein belongs to the universal ribosomal protein uS11 family. As to quaternary structure, part of the 30S ribosomal subunit.

It is found in the plastid. The protein localises to the chloroplast. The chain is Small ribosomal subunit protein uS11c from Gossypium hirsutum (Upland cotton).